The primary structure comprises 300 residues: 4-hydroxy-tetrahydrodipicolinate synthase (300 aa).

T54 provides a ligand contact to pyruvate. Y142 functions as the Proton donor/acceptor in the catalytic mechanism. The Schiff-base intermediate with substrate role is filled by K170. I212 lines the pyruvate pocket.

The protein belongs to the DapA family. Homotetramer; dimer of dimers.

It is found in the cytoplasm. It catalyses the reaction L-aspartate 4-semialdehyde + pyruvate = (2S,4S)-4-hydroxy-2,3,4,5-tetrahydrodipicolinate + H2O + H(+). It functions in the pathway amino-acid biosynthesis; L-lysine biosynthesis via DAP pathway; (S)-tetrahydrodipicolinate from L-aspartate: step 3/4. In terms of biological role, catalyzes the condensation of (S)-aspartate-beta-semialdehyde [(S)-ASA] and pyruvate to 4-hydroxy-tetrahydrodipicolinate (HTPA). The polypeptide is 4-hydroxy-tetrahydrodipicolinate synthase (Halorhodospira halophila (strain DSM 244 / SL1) (Ectothiorhodospira halophila (strain DSM 244 / SL1))).